Here is a 145-residue protein sequence, read N- to C-terminus: Large ribosomal subunit protein cL37 (145 aa).

The transit peptide at 1 to 63 (MALLCFNSFT…PRKNSIFIAS (63 aa)) directs the protein to the chloroplast. The interval 125–145 (KRRLRKKGNWPPSKMKKLEGV) is disordered.

The protein belongs to the chloroplast-specific ribosomal protein cL37 family. Part of the 50S ribosomal subunit.

Its subcellular location is the plastid. It localises to the chloroplast. In Pisum sativum (Garden pea), this protein is Large ribosomal subunit protein cL37 (PSRP5).